A 505-amino-acid chain; its full sequence is Deoxyguanosinetriphosphate triphosphohydrolase (505 aa).

The 208-residue stretch at 66-273 (RLTHSMEVQQ…MEAADDISYC (208 aa)) folds into the HD domain.

This sequence belongs to the dGTPase family. Type 1 subfamily. As to quaternary structure, homotetramer. The cofactor is Mg(2+).

It carries out the reaction dGTP + H2O = 2'-deoxyguanosine + triphosphate + H(+). Functionally, dGTPase preferentially hydrolyzes dGTP over the other canonical NTPs. This chain is Deoxyguanosinetriphosphate triphosphohydrolase, found in Escherichia coli O127:H6 (strain E2348/69 / EPEC).